We begin with the raw amino-acid sequence, 304 residues long: Dihydroorotate dehydrogenase B (NAD(+)), catalytic subunit (304 aa).

Residues S21 and 45–46 (KA) contribute to the FMN site. Residues K45 and 69–73 (NAIGL) each bind substrate. N99 and N127 together coordinate FMN. N127 contributes to the substrate binding site. Catalysis depends on C130, which acts as the Nucleophile. FMN contacts are provided by K165 and I191. 192–193 (NT) serves as a coordination point for substrate. FMN contacts are provided by residues G217, 243–244 (GG), and 265–266 (GT).

This sequence belongs to the dihydroorotate dehydrogenase family. Type 1 subfamily. Heterotetramer of 2 PyrK and 2 PyrD type B subunits. The cofactor is FMN.

The protein resides in the cytoplasm. It carries out the reaction (S)-dihydroorotate + NAD(+) = orotate + NADH + H(+). It participates in pyrimidine metabolism; UMP biosynthesis via de novo pathway; orotate from (S)-dihydroorotate (NAD(+) route): step 1/1. Functionally, catalyzes the conversion of dihydroorotate to orotate with NAD(+) as electron acceptor. In Listeria monocytogenes serovar 1/2a (strain ATCC BAA-679 / EGD-e), this protein is Dihydroorotate dehydrogenase B (NAD(+)), catalytic subunit (pyrD).